Here is a 321-residue protein sequence, read N- to C-terminus: Probable transaldolase (321 aa).

Lysine 133 serves as the catalytic Schiff-base intermediate with substrate.

Belongs to the transaldolase family. Type 1 subfamily. Homodimer.

Its subcellular location is the cytoplasm. It carries out the reaction D-sedoheptulose 7-phosphate + D-glyceraldehyde 3-phosphate = D-erythrose 4-phosphate + beta-D-fructose 6-phosphate. It participates in carbohydrate degradation; pentose phosphate pathway; D-glyceraldehyde 3-phosphate and beta-D-fructose 6-phosphate from D-ribose 5-phosphate and D-xylulose 5-phosphate (non-oxidative stage): step 2/3. Functionally, transaldolase is important for the balance of metabolites in the pentose-phosphate pathway. This chain is Probable transaldolase (tal), found in Dictyostelium discoideum (Social amoeba).